The following is a 386-amino-acid chain: 2,3-diketo-5-methylthiopentyl-1-phosphate enolase (386 aa).

K85 functions as the Proton acceptor in the catalytic mechanism. Residues K131, 157–160 (KDDE), H248, G316, and 338–339 (GT) contribute to the substrate site. 3 residues coordinate Mg(2+): K157, D159, and E160. K157 carries the post-translational modification N6-carboxylysine.

It belongs to the RuBisCO large chain family. Type IV subfamily. In terms of assembly, homodimer. Mg(2+) serves as cofactor.

The catalysed reaction is 5-methylsulfanyl-2,3-dioxopentyl phosphate = 2-hydroxy-5-methylsulfanyl-3-oxopent-1-enyl phosphate. It functions in the pathway amino-acid biosynthesis; L-methionine biosynthesis via salvage pathway; L-methionine from S-methyl-5-thio-alpha-D-ribose 1-phosphate: step 3/6. Its function is as follows. Catalyzes the enolization of 2,3-diketo-5-methylthiopentyl-1-phosphate (DK-MTP-1-P) into 2-hydroxy-3-keto-5-methylthiopentenyl-1-phosphate (HK-MTPenyl-1-P). The polypeptide is 2,3-diketo-5-methylthiopentyl-1-phosphate enolase (mtnW) (Microcystis aeruginosa).